Here is a 394-residue protein sequence, read N- to C-terminus: 1-deoxy-D-xylulose 5-phosphate reductoisomerase (394 aa).

Residues Thr-10, Gly-11, Ser-12, Ile-13, Gly-38, Arg-39, Asn-40, and Asn-123 each coordinate NADPH. 1-deoxy-D-xylulose 5-phosphate is bound at residue Lys-124. Position 125 (Glu-125) interacts with NADPH. Asp-149 contributes to the Mn(2+) binding site. 1-deoxy-D-xylulose 5-phosphate is bound by residues Ser-150, Glu-151, Ser-175, and His-198. Glu-151 lines the Mn(2+) pocket. An NADPH-binding site is contributed by Gly-204. Positions 211, 216, 217, and 220 each coordinate 1-deoxy-D-xylulose 5-phosphate. Glu-220 is a Mn(2+) binding site.

It belongs to the DXR family. Mg(2+) is required as a cofactor. Mn(2+) serves as cofactor.

It catalyses the reaction 2-C-methyl-D-erythritol 4-phosphate + NADP(+) = 1-deoxy-D-xylulose 5-phosphate + NADPH + H(+). Its pathway is isoprenoid biosynthesis; isopentenyl diphosphate biosynthesis via DXP pathway; isopentenyl diphosphate from 1-deoxy-D-xylulose 5-phosphate: step 1/6. Functionally, catalyzes the NADPH-dependent rearrangement and reduction of 1-deoxy-D-xylulose-5-phosphate (DXP) to 2-C-methyl-D-erythritol 4-phosphate (MEP). The sequence is that of 1-deoxy-D-xylulose 5-phosphate reductoisomerase from Cereibacter sphaeroides (strain ATCC 17025 / ATH 2.4.3) (Rhodobacter sphaeroides).